Consider the following 284-residue polypeptide: MLWKVSKMFLGGLVALTTISVATLYHYQNRLVYPSWAQGARNHVDTPDSRGIPYEKLTLITQDHIKLEAWDIKNENSTSTVLILCPNAGNIGYFILIIDIFYRQFGMSVFIYSYRGYGNSEGSPSEKGLKLDADCVISHLSTDSFHSKRKLVLYGRSLGGANALYIASKFRDLCDGVILENTFLSIRKVIPYIFPLLKRFTLLCHEIWNSEGLMGSCSSETPFLFLSGLKDEIVPPFHMRKLYETCPSSNKKIFEFPLGSHNDTIIQDGYWDIIRDFLIEKGFI.

Topologically, residues 1–8 (MLWKVSKM) are cytoplasmic. Residues 9-25 (FLGGLVALTTISVATLY) form a helical membrane-spanning segment. Topologically, residues 26 to 80 (HYQNRLVYPSWAQGARNHVDTPDSRGIPYEKLTLITQDHIKLEAWDIKNENSTST) are extracellular. A helical transmembrane segment spans residues 81 to 101 (VLILCPNAGNIGYFILIIDIF). The Cytoplasmic segment spans residues 102 to 284 (YRQFGMSVFI…RDFLIEKGFI (183 aa)).

It to S.pombe bem46 and M.tuberculosis Rv2307c.

The protein localises to the mitochondrion membrane. This is an uncharacterized protein from Saccharomyces cerevisiae (strain ATCC 204508 / S288c) (Baker's yeast).